The chain runs to 313 residues: uncharacterized protein (313 aa).

This sequence to M.jannaschii MJ0977 C-terminal region.

This is an uncharacterized protein from Methanocaldococcus jannaschii (strain ATCC 43067 / DSM 2661 / JAL-1 / JCM 10045 / NBRC 100440) (Methanococcus jannaschii).